Here is a 213-residue protein sequence, read N- to C-terminus: Orotate phosphoribosyltransferase (213 aa).

Lys26 is a 5-phospho-alpha-D-ribose 1-diphosphate binding site. 34–35 (FF) provides a ligand contact to orotate. 5-phospho-alpha-D-ribose 1-diphosphate is bound by residues 72 to 73 (YK), Arg99, Lys100, Lys103, His105, and 124 to 132 (DDVITAGTA). The orotate site is built by Thr128 and Arg156.

This sequence belongs to the purine/pyrimidine phosphoribosyltransferase family. PyrE subfamily. Homodimer. Mg(2+) serves as cofactor.

The enzyme catalyses orotidine 5'-phosphate + diphosphate = orotate + 5-phospho-alpha-D-ribose 1-diphosphate. Its pathway is pyrimidine metabolism; UMP biosynthesis via de novo pathway; UMP from orotate: step 1/2. Functionally, catalyzes the transfer of a ribosyl phosphate group from 5-phosphoribose 1-diphosphate to orotate, leading to the formation of orotidine monophosphate (OMP). The polypeptide is Orotate phosphoribosyltransferase (Yersinia enterocolitica serotype O:8 / biotype 1B (strain NCTC 13174 / 8081)).